The chain runs to 556 residues: 2-succinyl-5-enolpyruvyl-6-hydroxy-3-cyclohexene-1-carboxylate synthase (556 aa).

This sequence belongs to the TPP enzyme family. MenD subfamily. As to quaternary structure, homodimer. Mg(2+) serves as cofactor. It depends on Mn(2+) as a cofactor. Thiamine diphosphate is required as a cofactor.

It catalyses the reaction isochorismate + 2-oxoglutarate + H(+) = 5-enolpyruvoyl-6-hydroxy-2-succinyl-cyclohex-3-ene-1-carboxylate + CO2. It functions in the pathway quinol/quinone metabolism; 1,4-dihydroxy-2-naphthoate biosynthesis; 1,4-dihydroxy-2-naphthoate from chorismate: step 2/7. Its pathway is quinol/quinone metabolism; menaquinone biosynthesis. Its function is as follows. Catalyzes the thiamine diphosphate-dependent decarboxylation of 2-oxoglutarate and the subsequent addition of the resulting succinic semialdehyde-thiamine pyrophosphate anion to isochorismate to yield 2-succinyl-5-enolpyruvyl-6-hydroxy-3-cyclohexene-1-carboxylate (SEPHCHC). This Klebsiella pneumoniae (strain 342) protein is 2-succinyl-5-enolpyruvyl-6-hydroxy-3-cyclohexene-1-carboxylate synthase.